We begin with the raw amino-acid sequence, 239 residues long: IkB-like protein (239 aa).

4 ANK repeats span residues 48–77, 87–116, 124–153, and 158–187; these read NKIT…YPGE, DGNS…KNGI, NGVT…NPNR, and KGFT…KPLF. A Nuclear localization signal motif is present at residues 81 to 87; the sequence is HYRRDKD. The Nuclear localization signal signature appears at 203-214; the sequence is KKKPKIIITGCE. The PxIxITxC motif; Interaction with host PPP3CA motif lies at 206-213; the sequence is PKIIITGC. Positions 228 to 231 match the FLCV motif motif; sequence FLCV.

It belongs to the asfivirus A238L family. In terms of assembly, interacts with host PPIA. Interacts with host PPP3CA/Calcineurin. Interacts with host RELA/p65; interaction of the 32 kDa form with host RELA results in the formation of a stable complex with NF-kappa-B. Interacts with host PPP3R1. Interacts with host EP300; this interaction inhibits the association of host EP300 with host RELA, JUN and NFATC2. The protein exists in a 28 kDa and a 32 kDa form, probably due to post-translational modifications which are neither phosphorylation, nor sumoylation.

It localises to the host nucleus. Its subcellular location is the host cytoplasm. IkB-like protein that inhibits the binding of NF-kappa-B to DNA, thereby downregulating pro-inflammatory cytokine production. Forms a heterodimer with the NF-kappa-B subunit RELA/p65 and prevents the activation of the NF-kappa-B transcription factor. Inhibits calcineurin function, which is required for the induction of nuclear factor of activated T cells (NFAT)-dependent immune response genes. Prevents the binding of substrates to calcineurin without affecting the phosphatase activity. Does not contain the serine residues that are phosphorylated by host IkB kinase and thus is not degraded following stimulation of the NFkB pathway. This chain is IkB-like protein (A238L), found in Ornithodoros (relapsing fever ticks).